A 243-amino-acid polypeptide reads, in one-letter code: RNA-binding protein with serine-rich domain 1 homolog (243 aa).

The interval 48 to 92 (SSTRQFNNTRSPSGRSASRSSNFSHRSSSRDSFSSNRSYSSSLSR) is disordered. Residues 57-92 (RSPSGRSASRSSNFSHRSSSRDSFSSNRSYSSSLSR) are compositionally biased toward low complexity. Residues 99-177 (RTILVENLTR…EELFVSIKRF (79 aa)) form the RRM domain. The disordered stretch occupies residues 189–243 (YENSYRPSRSQNNSHYNDKSFHRSRYSRARSRSPGSNISEYSDQSPPYHSYRHRP). Residues 193 to 203 (YRPSRSQNNSH) show a composition bias toward polar residues. Basic residues predominate over residues 210–219 (HRSRYSRARS). Positions 222–235 (PGSNISEYSDQSPP) are enriched in polar residues.

Belongs to the splicing factor SR family. As to quaternary structure, component of the active spliceosome.

It localises to the cytoplasm. The protein localises to the nucleus. Putative component of the spliceosome which enhances the formation of the ATP-dependent A complex of the spliceosome. may participate in mRNA 3'-end cleavage. Also mediates increase of mRNA abundance and translational efficiency. The protein is RNA-binding protein with serine-rich domain 1 homolog of Schizosaccharomyces pombe (strain 972 / ATCC 24843) (Fission yeast).